The sequence spans 381 residues: Terpene cyclase ATR13 (381 aa).

Belongs to the terpene synthase family.

It functions in the pathway mycotoxin biosynthesis. In terms of biological role, terpene cyclase; part of the core atranone cluster (CAC) which products are predicted to catalyze most or all steps of mycotoxin atranone synthesis, starting from geranylgeranyl pyrophosphate (GGPP). The initial cyclization of GGPP to dolabellane is probably performed by the terpene cyclase ATR13. The Baeyer-Villiger oxidation near the end of the atranone synthesis, which converts atranones D and E to atranones F and G is predicted to be catalyzed by the monooxygenase ATR8. Of the CAC's other predicted gene products, the reducing PKS ATR6 might synthesize a polyketide chain. This polyketide is probably transferred onto the atranone backbone by the polyketide transferase ATR5. Other predicted CAC products include 4 oxygenases (ATR2, ATR3, ATR4, and ATR14), 3 short-chain reductases (ATR7, ATR9, and ATR10), and a methyltransferase (ATR12). These may all be involved in the various steps of atranone biosynthesis, although their specific roles must await experimental determination. The chain is Terpene cyclase ATR13 from Stachybotrys chlorohalonatus (strain IBT 40285).